Here is a 581-residue protein sequence, read N- to C-terminus: Estrogen receptor (581 aa).

The modulating stretch occupies residues 1 to 144; the sequence is MYPEDSRVSG…GFEMAKEMRF (144 aa). Disordered stretches follow at residues 45–66 and 99–123; these read APLD…SGPN and RSSV…DSYS. Over residues 56 to 66 the composition is skewed to polar residues; sequence GSLQSLGSGPN. A DNA-binding region (nuclear receptor) is located at residues 142 to 217; the sequence is MRFCAVCSDY…VGMMKGGVRK (76 aa). NR C4-type zinc fingers lie at residues 145–165 and 181–200; these read CAVC…CEGC and CPAT…CQAC. Positions 211-272 are hinge; the sequence is MKGGVRKDRG…GGGKSSVISM (62 aa). Positions 216–246 are enriched in basic and acidic residues; sequence RKDRGRVLRRDKRRTGTSDRDKASKGLEHRT. Residues 216-269 form a disordered region; that stretch reads RKDRGRVLRRDKRRTGTSDRDKASKGLEHRTAPPQDRRKHISSSAGGGGGKSSV. Positions 273-509 constitute an NR LBD domain; the sequence is PPDQVLLLLR…DLLLEMLDAH (237 aa). Over residues 514–528 the composition is skewed to basic and acidic residues; the sequence is PDRPAETWSQADREP. The disordered stretch occupies residues 514 to 581; that stretch reads PDRPAETWSQ…VHPHPMKPTE (68 aa). The segment covering 572–581 has biased composition (basic residues); it reads VHPHPMKPTE.

Belongs to the nuclear hormone receptor family. NR3 subfamily. In terms of assembly, binds DNA as a homodimer. Can form a heterodimer with ER-beta.

The protein localises to the nucleus. Functionally, the steroid hormones and their receptors are involved in the regulation of eukaryotic gene expression and affect cellular proliferation and differentiation in target tissues. This is Estrogen receptor (esr1) from Sparus aurata (Gilthead sea bream).